We begin with the raw amino-acid sequence, 335 residues long: 2-acylglycerol O-acyltransferase 2 (335 aa).

A run of 2 helical transmembrane segments spans residues 24-44 (WAVSFLAMAQCCIALYILLLF) and 104-124 (YIMGFHPHGVLVVGAFGNFCT). An N-linked (GlcNAc...) asparagine glycan is attached at asparagine 206.

This sequence belongs to the diacylglycerol acyltransferase family.

The protein localises to the endoplasmic reticulum membrane. Its subcellular location is the cytoplasm. It localises to the perinuclear region. The catalysed reaction is a 2-acylglycerol + an acyl-CoA = a 1,2-diacylglycerol + CoA. The enzyme catalyses a 2-acylglycerol + an acyl-CoA = a 1,2-diacyl-sn-glycerol + CoA. It carries out the reaction a 2-acylglycerol + an acyl-CoA = a 2,3-diacyl-sn-glycerol + CoA. It catalyses the reaction a 1-acylglycerol + an acyl-CoA = a 1,2-diacylglycerol + CoA. The catalysed reaction is a 1-acylglycerol + an acyl-CoA = a 1,3-diacylglycerol + CoA. The enzyme catalyses 1-O-alkylglycerol + an acyl-CoA = 1-O-alkyl-3-acylglycerol + CoA. It carries out the reaction an acyl-CoA + a 1,2-diacyl-sn-glycerol = a triacyl-sn-glycerol + CoA. Its pathway is glycerolipid metabolism; triacylglycerol biosynthesis. Involved in glycerolipid synthesis and lipid metabolism. Catalyzes the formation of diacylglycerol, the precursor of triacylglycerol, by transferring the acyl chain of a fatty acyl-CoA to a monoacylglycerol. Plays a central role in absorption of dietary fat in the small intestine by catalyzing the resynthesis of triacylglycerol in enterocytes. Has a preference toward monoacylglycerols containing unsaturated fatty acids in an order of C18:3 &gt; C18:2 &gt; C18:1 &gt; C18:0 at sn-2. Able to use 1-monoalkylglycerol (1-MAkG, 1-O-alkylglycerol) as an acyl acceptor for the synthesis of monoalkyl-monoacylglycerol (MAMAG, 1-O-alkyl-3-acylglycerol or 1-O-alkyl-2-acylglycerol) and subsequently, with lower efficiency, may add another acyl chain producing monoalkyl-diacylglycerol (MADAG, 1-O-alkyl-2,3-diacylglycerol). Possesses weak but significant activity with diacylglycerol as substrate, producing triacylglycerol (triacyl-sn-glycerol). The sequence is that of 2-acylglycerol O-acyltransferase 2 (mogat2) from Xenopus tropicalis (Western clawed frog).